Here is an 868-residue protein sequence, read N- to C-terminus: Transcription factor pynR (868 aa).

A DNA-binding region (zn(2)-C6 fungal-type) is located at residues 11 to 37; it reads CTFCRTRKIACSGERICNACRSRSIEC. Disordered regions lie at residues 51 to 88, 662 to 683, 715 to 761, and 829 to 868; these read NKTT…TSAV, LSGS…LDLS, SGIP…ASDL, and GMGE…GMSN. Composition is skewed to low complexity over residues 663 to 683 and 715 to 727; these read SGSR…LDLS and SGIP…SISH.

The protein localises to the nucleus. Functionally, transcription factor that regulates the expression of the gene cluster that mediates the biosynthesis of pyranonigrins, a family of antioxidative compounds. In Aspergillus niger (strain ATCC MYA-4892 / CBS 513.88 / FGSC A1513), this protein is Transcription factor pynR.